A 221-amino-acid polypeptide reads, in one-letter code: Transcription factor HES-4 (221 aa).

Over residues 1–22 (MAADTPGKPSASPMAGAPASAS) the composition is skewed to low complexity. The segment at 1–49 (MAADTPGKPSASPMAGAPASASRTPDKPRSAAEHRKSSKPVMEKRRRAR) is disordered. The segment covering 24–35 (TPDKPRSAAEHR) has biased composition (basic and acidic residues). The bHLH domain occupies 34 to 91 (HRKSSKPVMEKRRRARINESLAQLKTLILDALRKESSRHSKLEKADILEMTVRHLRSL). An Orange domain is found at 110–143 (YRAGFHECLAEVNRFLAGCEGVPADVRSRLLGHL). The disordered stretch occupies residues 201–221 (LPAAPRAGPQGPGGPWRPWLR). The short motif at 216–219 (WRPW) is the WRPW motif element.

In terms of assembly, transcription repression requires formation of a complex with a corepressor protein of the Groucho/TLE family.

The protein localises to the nucleus. Its function is as follows. Transcriptional repressor. Binds DNA on N-box motifs: 5'-CACNAG-3'. The polypeptide is Transcription factor HES-4 (HES4) (Homo sapiens (Human)).